The sequence spans 448 residues: tRNA methyltransferase 10 homolog C (448 aa).

Residues 1–48 (MAFVNTLLRTIRCSAVHTLVQEGRSLSLLKASHQLTQSRKIMLSNHVR) constitute a mitochondrion transit peptide. The stretch at 137–165 (REVMKTNRKEKKKELKESKSKIESLDQLE) forms a coiled coil. Residues 144-167 (RKEKKKELKESKSKIESLDQLETK) form a disordered region. In terms of domain architecture, SAM-dependent MTase TRM10-type spans 190–382 (QRWKCVQAMK…SFVPNRKHDG (193 aa)). The segment at 429–448 (ERTDDTSIRSTRKRWWEEEN) is disordered.

The protein belongs to the class IV-like SAM-binding methyltransferase superfamily. TRM10 family. As to quaternary structure, component of mitochondrial ribonuclease P. Interacts with HSD17B10/MRPP2.

The protein resides in the mitochondrion matrix. Its subcellular location is the mitochondrion nucleoid. It carries out the reaction adenosine(9) in tRNA + S-adenosyl-L-methionine = N(1)-methyladenosine(9) in tRNA + S-adenosyl-L-homocysteine + H(+). The catalysed reaction is guanosine(9) in tRNA + S-adenosyl-L-methionine = N(1)-methylguanosine(9) in tRNA + S-adenosyl-L-homocysteine + H(+). It catalyses the reaction an adenosine in mRNA + S-adenosyl-L-methionine = an N(1)-methyladenosine in mRNA + S-adenosyl-L-homocysteine + H(+). Functionally, mitochondrial tRNA N(1)-methyltransferase involved in mitochondrial tRNA maturation. Component of mitochondrial ribonuclease P, which cleaves tRNA molecules in their 5'-ends. Together with hsd17b10/mrpp2, forms a subcomplex of the mitochondrial ribonuclease P, named MRPP1-MRPP2 subcomplex, which displays functions that are independent of the ribonuclease P activity. The MRPP1-MRPP2 subcomplex catalyzes the formation of N(1)-methylguanine and N(1)-methyladenine at position 9 (m1G9 and m1A9, respectively) in tRNAs; trmt10c/mrpp1 acting as the catalytic N(1)-methyltransferase subunit. The MRPP1-MRPP2 subcomplex also acts as a tRNA maturation platform: following 5'-end cleavage by the mitochondrial ribonuclease P complex, the MRPP1-MRPP2 subcomplex enhances the efficiency of 3'-processing catalyzed by ELAC2, retains the tRNA product after elac2 processing and presents the nascent tRNA to the mitochondrial CCA tRNA nucleotidyltransferase TRNT1 enzyme. In addition to tRNA N(1)-methyltransferase activity, trmt10c/mrpp1 also acts as a mRNA N(1)-methyltransferase by mediating methylation of adenosine residues at the N(1) position of MT-ND5 mRNA. This is tRNA methyltransferase 10 homolog C from Xenopus tropicalis (Western clawed frog).